The sequence spans 640 residues: Protein ALTERED PHOSPHATE STARVATION RESPONSE 1 (640 aa).

The interval 60–175 (TPLHLHHNPP…ATPQASSVVS (116 aa)) is disordered. Pro residues predominate over residues 68–87 (PPSPSPPPPPPPRPPPPPLS). Residues 88–103 (PGSETTTWTTTTTSSV) are compositionally biased toward low complexity. Over residues 104–118 (LPPPPPPPPPPPPPS) the composition is skewed to pro residues. Positions 144–173 (TTATRTATGTGSDAAVTTAPTTATPQASSV) are enriched in low complexity. The stretch at 336–371 (KTEKAKKDVEKLESQLSVSSQAIQSASNEIIKLRET) forms a coiled coil.

In terms of tissue distribution, expressed in the root tip of primary and lateral roots, specifically in the meristematic region, including the quiescent center and lateral root cap cells.

The protein localises to the nucleus. Required for the coordination of cell differentiation and cell elongation in the root tip. Required for the coordination of cell processes necessary for correct root growth in response to phosphate starvation, through the modulation of the auxin transporter protein PIN7. The chain is Protein ALTERED PHOSPHATE STARVATION RESPONSE 1 from Arabidopsis thaliana (Mouse-ear cress).